The chain runs to 64 residues: Large ribosomal subunit protein bL32 (64 aa).

The tract at residues 1–64 (MAVQQNRKTR…APKHGDETEE (64 aa)) is disordered. Positions 7 to 16 (RKTRSKRGMR) are enriched in basic residues.

It belongs to the bacterial ribosomal protein bL32 family.

The protein is Large ribosomal subunit protein bL32 of Methylococcus capsulatus (strain ATCC 33009 / NCIMB 11132 / Bath).